The following is a 289-amino-acid chain: 4-hydroxybenzoate octaprenyltransferase (289 aa).

7 helical membrane-spanning segments follow: residues 33 to 53 (LWALWVAAPGLPPLWILAVFV), 99 to 119 (LFVVLVVLAFLLVLTLNTMTI), 141 to 161 (LPQVVLGAAFGWSIPMAFAAV), 163 to 183 (ESVPLSCWLMFLANILWAVAY), 213 to 233 (LIIGILQVAVLALMVVIGRLN), 238 to 258 (EFYWSVLVAGLLFAYQQKLIV), and 268 to 288 (AFLNNNYVGLVLFLGLAMSYW).

It belongs to the UbiA prenyltransferase family. Requires Mg(2+) as cofactor.

It localises to the cell inner membrane. It catalyses the reaction all-trans-octaprenyl diphosphate + 4-hydroxybenzoate = 4-hydroxy-3-(all-trans-octaprenyl)benzoate + diphosphate. The protein operates within cofactor biosynthesis; ubiquinone biosynthesis. Functionally, catalyzes the prenylation of para-hydroxybenzoate (PHB) with an all-trans polyprenyl group. Mediates the second step in the final reaction sequence of ubiquinone-8 (UQ-8) biosynthesis, which is the condensation of the polyisoprenoid side chain with PHB, generating the first membrane-bound Q intermediate 3-octaprenyl-4-hydroxybenzoate. This Enterobacter sp. (strain 638) protein is 4-hydroxybenzoate octaprenyltransferase.